Here is a 79-residue protein sequence, read N- to C-terminus: Small ribosomal subunit protein bS16 (79 aa).

Belongs to the bacterial ribosomal protein bS16 family.

The sequence is that of Small ribosomal subunit protein bS16 from Hahella chejuensis (strain KCTC 2396).